Here is a 423-residue protein sequence, read N- to C-terminus: Gamma-glutamyl phosphate reductase (423 aa).

This sequence belongs to the gamma-glutamyl phosphate reductase family.

Its subcellular location is the cytoplasm. The enzyme catalyses L-glutamate 5-semialdehyde + phosphate + NADP(+) = L-glutamyl 5-phosphate + NADPH + H(+). It functions in the pathway amino-acid biosynthesis; L-proline biosynthesis; L-glutamate 5-semialdehyde from L-glutamate: step 2/2. Functionally, catalyzes the NADPH-dependent reduction of L-glutamate 5-phosphate into L-glutamate 5-semialdehyde and phosphate. The product spontaneously undergoes cyclization to form 1-pyrroline-5-carboxylate. This is Gamma-glutamyl phosphate reductase from Paraburkholderia phymatum (strain DSM 17167 / CIP 108236 / LMG 21445 / STM815) (Burkholderia phymatum).